We begin with the raw amino-acid sequence, 352 residues long: 4-hydroxy-3-methylbut-2-en-1-yl diphosphate synthase (flavodoxin) (352 aa).

Cys-265, Cys-268, Cys-300, and Glu-307 together coordinate [4Fe-4S] cluster.

The protein belongs to the IspG family. It depends on [4Fe-4S] cluster as a cofactor.

The catalysed reaction is (2E)-4-hydroxy-3-methylbut-2-enyl diphosphate + oxidized [flavodoxin] + H2O + 2 H(+) = 2-C-methyl-D-erythritol 2,4-cyclic diphosphate + reduced [flavodoxin]. It functions in the pathway isoprenoid biosynthesis; isopentenyl diphosphate biosynthesis via DXP pathway; isopentenyl diphosphate from 1-deoxy-D-xylulose 5-phosphate: step 5/6. Converts 2C-methyl-D-erythritol 2,4-cyclodiphosphate (ME-2,4cPP) into 1-hydroxy-2-methyl-2-(E)-butenyl 4-diphosphate. This Persephonella marina (strain DSM 14350 / EX-H1) protein is 4-hydroxy-3-methylbut-2-en-1-yl diphosphate synthase (flavodoxin).